The chain runs to 314 residues: Testisin (314 aa).

Positions 1–19 (MGARGALLLALLLARAGLR) are cleaved as a signal peptide. Residues 20-41 (KPESQEAAPLSGPCGRRVITSR) constitute a propeptide that is removed on maturation. Intrachain disulfides connect cysteine 33–cysteine 157 and cysteine 67–cysteine 83. In terms of domain architecture, Peptidase S1 spans 42–286 (IVGGEDAELG…HFEWIQKLMA (245 aa)). Residues histidine 82 and aspartate 137 each act as charge relay system in the active site. N-linked (GlcNAc...) asparagine glycosylation is found at asparagine 167 and asparagine 200. 3 cysteine pairs are disulfide-bonded: cysteine 171–cysteine 244, cysteine 204–cysteine 223, and cysteine 234–cysteine 262. The active-site Charge relay system is the serine 238. An N-linked (GlcNAc...) asparagine glycan is attached at asparagine 273. The GPI-anchor amidated serine moiety is linked to residue serine 288. The propeptide at 289-314 (GMSQPDPSWPLLFFPLLWALPLLGPV) is removed in mature form.

Belongs to the peptidase S1 family. Expressed predominantly in premeiotic testicular germ cells, mostly late pachytene and diplotene spermatocytes.

Its subcellular location is the cell membrane. Could regulate proteolytic events associated with testicular germ cell maturation. The polypeptide is Testisin (PRSS21) (Homo sapiens (Human)).